Consider the following 257-residue polypeptide: MRHTMELTMVGTGSAFSKKFYNNSALVEFSNGYRLLIDCGHSVPKGLHALGFPLDSLDGILITHTHADHIGGLEEVALYNKFVLGGRKIDLLVPNTLVESLWENSLKGGLRYPDEGSPEPELSDYFTVRSLKTSSYGVAHTQIEENMAVRLYPTVHVSHMDSYAVGLVDRGEDKVFYSSDTIFDEYLIDYALTYSWVFHDCQFFTGGVHASLDELLSYISEEDQSRVFLMHYGDNMEDFFTKAGMMRFALQGRTYIL.

The tract at residues 21–231 (YNNSALVEFS…EDQSRVFLMH (211 aa)) is beta-lactamase-like. Positions 64, 66, 68, 69, 156, 180, and 231 each coordinate Zn(2+).

Belongs to the anti-Pycsar protein Apyc1 family. As to quaternary structure, homodimer. Zn(2+) serves as cofactor.

It carries out the reaction 3',5'-cyclic CMP + H2O = CMP + H(+). The catalysed reaction is 3',5'-cyclic UMP + H2O = UMP + H(+). Its function is as follows. Counteracts the host Pycsar antiviral defense system. Phosphodiesterase that enables metal-dependent hydrolysis of host cyclic nucleotide Pycsar defense signals such as cCMP and cUMP. The sequence is that of Anti-Pycsar protein Apyc1 from Bacillus phage 010DV004.